Consider the following 495-residue polypeptide: Taxoid 2-alpha-hydroxylase (495 aa).

Residues 17-37 (LQSSAILLTVVSGIIVIVILL) form a helical membrane-spanning segment. Heme is bound at residue Cys441.

It belongs to the cytochrome P450 family.

The protein resides in the microsome membrane. It carries out the reaction taxusin + reduced [NADPH--hemoprotein reductase] + O2 = 2alpha-hydroxytaxusin + oxidized [NADPH--hemoprotein reductase] + H2O + H(+). It catalyses the reaction 7beta-hydroxytaxusin + reduced [NADPH--hemoprotein reductase] + O2 = 2alpha,7beta-dihydroxytaxusin + oxidized [NADPH--hemoprotein reductase] + H2O + H(+). It participates in alkaloid biosynthesis; taxol biosynthesis. Its function is as follows. Catalyzes the conversion of taxusin to 2-alpha-hydroxytaxusin in taxol biosynthesis. Catalyzes the conversion of 7-beta-hydroxytaxusin to 2-alpha-7-beta-hydroxytaxusin in taxol biosynthesis. The polypeptide is Taxoid 2-alpha-hydroxylase (Taxus canadensis (Canadian yew)).